Reading from the N-terminus, the 340-residue chain is Thioesterase pkgB (340 aa).

Residues His97, His99, Asp101, His102, and His205 each contribute to the Zn(2+) site. Catalysis depends on Asp101, which acts as the Proton donor/acceptor. The segment covering 242 to 258 has biased composition (low complexity); it reads SSRNGGSTSSIGSVSES. A disordered region spans residues 242-271; sequence SSRNGGSTSSIGSVSESGDSDEEDNNMKTS.

This sequence belongs to the metallo-beta-lactamase superfamily. Requires Zn(2+) as cofactor.

The catalysed reaction is 3,5,7,9,11,13-hexaoxotetradecanoyl-[ACP] = dehydrocitreoisocoumarin + holo-[ACP] + H2O. The enzyme catalyses 3,5,7,9,11-pentaoxododecanoyl-[ACP] = 6,8-dihydroxy-3-(2-oxopropyl)-isocoumarin + holo-[ACP] + H2O. Its function is as follows. Thioesterase; part of the pkg gene cluster that mediates the biosynthesis of dihydrocitreoisocoumarin and 6,8-dihydroxy-3-(2-oxopropyl)-isocoumarin. The non-reducing polyketide synthase pkgA performs the condensation of one acetyl-CoA starter unit with 6 and 5 malonyl-CoA units, respectively. As pkgA lacks a releasing domain, the thioesterase pkgB is necessary to break the thioester bond and release dihydrocitreoisocoumarin and 6,8-dihydroxy-3-(2-oxopropyl)-isocoumarin from pkgA. The sequence is that of Thioesterase pkgB from Emericella nidulans (strain FGSC A4 / ATCC 38163 / CBS 112.46 / NRRL 194 / M139) (Aspergillus nidulans).